A 206-amino-acid polypeptide reads, in one-letter code: UPF0502 protein Acid_1185 (206 aa).

The protein belongs to the UPF0502 family.

The polypeptide is UPF0502 protein Acid_1185 (Solibacter usitatus (strain Ellin6076)).